The primary structure comprises 131 residues: C-C motif chemokine 21 (131 aa).

Positions 1–23 are cleaved as a signal peptide; sequence MAQSLALSLLILVLAFGIPGTQG. 3 cysteine pairs are disulfide-bonded: Cys31-Cys57, Cys32-Cys75, and Cys103-Cys119. A disordered region spans residues 89–131; it reads HLDKTPTPRKPVQGCRKDRGVPKNGKKGKGCKRTEQSQTPKGP.

This sequence belongs to the intercrine beta (chemokine CC) family. In terms of assembly, monomer. Binds to CCR7. Interacts with PDPN; relocalizes PDPN to the basolateral membrane. Interacts with TNFAIP6 (via Link domain). Interacts with GPR174.

Its subcellular location is the secreted. Inhibits hemopoiesis and stimulates chemotaxis. Chemotactic in vitro for thymocytes and activated T-cells, but not for B-cells, macrophages, or neutrophils. Shows preferential activity towards naive T-cells. May play a role in mediating homing of lymphocytes to secondary lymphoid organs. Binds to atypical chemokine receptor ACKR4 and mediates the recruitment of beta-arrestin (ARRB1/2) to ACKR4. The sequence is that of C-C motif chemokine 21 (CCL21) from Macaca mulatta (Rhesus macaque).